A 510-amino-acid chain; its full sequence is Histone deacetylase 3 (510 aa).

The interval Arg24 to Gly338 is histone deacetylase. The active-site Proton donor/acceptor is His158. 3 residues coordinate Zn(2+): Asp193, His195, and Asp281. The tract at residues Pro394–Lys510 is disordered. Composition is skewed to basic and acidic residues over residues Asp418–Pro434 and Val448–Pro472. Residues Ala485 to Asn503 show a composition bias toward low complexity.

It belongs to the histone deacetylase family. HD Type 1 subfamily. Requires Zn(2+) as cofactor. As to expression, expressed in roots.

It is found in the nucleus. The catalysed reaction is N(6)-acetyl-L-lysyl-[histone] + H2O = L-lysyl-[histone] + acetate. In terms of biological role, responsible for the deacetylation of lysine residues on the N-terminal part of the core histones (H2A, H2B, H3 and H4). Histone deacetylation gives a tag for epigenetic repression and plays an important role in transcriptional regulation, cell cycle progression and developmental events. Histone deacetylases act via the formation of large multiprotein complexes. This is Histone deacetylase 3 from Oryza sativa subsp. japonica (Rice).